Reading from the N-terminus, the 232-residue chain is Orotidine 5'-phosphate decarboxylase (232 aa).

Substrate is bound by residues D12, K34, 61–70 (DMKLLDIDNT), T116, R177, Q186, G206, and R207. The active-site Proton donor is the K63.

This sequence belongs to the OMP decarboxylase family. Type 1 subfamily. As to quaternary structure, homodimer.

It carries out the reaction orotidine 5'-phosphate + H(+) = UMP + CO2. Its pathway is pyrimidine metabolism; UMP biosynthesis via de novo pathway; UMP from orotate: step 2/2. In terms of biological role, catalyzes the decarboxylation of orotidine 5'-monophosphate (OMP) to uridine 5'-monophosphate (UMP). This is Orotidine 5'-phosphate decarboxylase from Sinorhizobium medicae (strain WSM419) (Ensifer medicae).